A 947-amino-acid chain; its full sequence is Protein translocase subunit SecA (947 aa).

Residues Gln-87, 105–109, and Asp-525 each bind ATP; that span reads GEGKT. Positions 905 to 928 are disordered; the sequence is PADNADKTARNPNDPSTWGKVGRN. Residues Cys-931, Cys-933, Cys-942, and His-943 each coordinate Zn(2+).

Belongs to the SecA family. In terms of assembly, monomer and homodimer. Part of the essential Sec protein translocation apparatus which comprises SecA, SecYEG and auxiliary proteins SecDF-YajC and YidC. Requires Zn(2+) as cofactor.

It localises to the cell inner membrane. It is found in the cytoplasm. It carries out the reaction ATP + H2O + cellular proteinSide 1 = ADP + phosphate + cellular proteinSide 2.. Its function is as follows. Part of the Sec protein translocase complex. Interacts with the SecYEG preprotein conducting channel. Has a central role in coupling the hydrolysis of ATP to the transfer of proteins into and across the cell membrane, serving both as a receptor for the preprotein-SecB complex and as an ATP-driven molecular motor driving the stepwise translocation of polypeptide chains across the membrane. The protein is Protein translocase subunit SecA of Rhodopseudomonas palustris (strain BisB18).